We begin with the raw amino-acid sequence, 146 residues long: Large ribosomal subunit protein uL15 (146 aa).

The segment covering M1–R18 has biased composition (basic and acidic residues). The tract at residues M1–F58 is disordered. Positions S42–G52 are enriched in gly residues.

It belongs to the universal ribosomal protein uL15 family. Part of the 50S ribosomal subunit.

Functionally, binds to the 23S rRNA. This is Large ribosomal subunit protein uL15 from Oceanobacillus iheyensis (strain DSM 14371 / CIP 107618 / JCM 11309 / KCTC 3954 / HTE831).